Here is a 313-residue protein sequence, read N- to C-terminus: MSELTQLAQQEKKQTYNFNKLQKRLRRNVGNAIADFGMIEDGDKVMVCLSGGKDSYTLLDILLNLQQSAPIKFDIVAVNLDQKQPGFPEHVLPEYLESIGVDYKIVQENTYGIVKEKIPEGKTTCSLCSRLRRGILYRTATELGATKIALGHHRDDMLATLFLNMFYGGKIKSMPPKLISDDGKQIVIRPLAYCKEKDIEKYAIAKEFPIIPCNLCGSQPNLQRQVVKEMLNTWDRQYPGRLETMFSAMQNITLSHMCDPKLFDFKGIKHGQLIDGIEGDTAFDEERITPMQFEDEDQTDFSNKEMINFKEVN.

The short motif at 50–55 is the PP-loop motif element; that stretch reads SGGKDS. [4Fe-4S] cluster-binding residues include cysteine 125, cysteine 128, and cysteine 216.

The protein belongs to the TtcA family. In terms of assembly, homodimer. The cofactor is Mg(2+). Requires [4Fe-4S] cluster as cofactor.

It is found in the cytoplasm. The enzyme catalyses cytidine(32) in tRNA + S-sulfanyl-L-cysteinyl-[cysteine desulfurase] + AH2 + ATP = 2-thiocytidine(32) in tRNA + L-cysteinyl-[cysteine desulfurase] + A + AMP + diphosphate + H(+). The protein operates within tRNA modification. Its function is as follows. Catalyzes the ATP-dependent 2-thiolation of cytidine in position 32 of tRNA, to form 2-thiocytidine (s(2)C32). The sulfur atoms are provided by the cysteine/cysteine desulfurase (IscS) system. This is tRNA-cytidine(32) 2-sulfurtransferase from Haemophilus influenzae (strain ATCC 51907 / DSM 11121 / KW20 / Rd).